A 635-amino-acid chain; its full sequence is Leucine aminopeptidase 2-2 (635 aa).

Substrate-binding positions include 141-143 and 265-270; these read QCQ and PYGGME. Zn(2+) is bound at residue His294. The active-site Proton acceptor is the Glu295. 2 residues coordinate Zn(2+): His298 and Glu317. The active-site Proton donor is Tyr399.

This sequence belongs to the peptidase M1 family. Zn(2+) serves as cofactor.

It localises to the cytoplasm. It is found in the nucleus. It catalyses the reaction an epoxide + H2O = an ethanediol. In terms of biological role, aminopeptidase that preferentially cleaves di- and tripeptides. Also has low epoxide hydrolase activity (in vitro). Can hydrolyze the epoxide leukotriene LTA(4) but it forms preferentially 5,6-dihydroxy-7,9,11,14-eicosatetraenoic acid rather than the cytokine leukotriene B(4) as the product compared to the homologous mammalian enzyme (in vitro). The protein is Leucine aminopeptidase 2-2 (LTA4) of Scheffersomyces stipitis (strain ATCC 58785 / CBS 6054 / NBRC 10063 / NRRL Y-11545) (Yeast).